The sequence spans 354 residues: Zinc finger protein 346 (354 aa).

4 Matrin-type zinc fingers span residues 34 to 64, 95 to 125, 165 to 195, and 232 to 262; these read TQCK…KVRR, KCCP…NLRL, KFCK…QETK, and FSCD…QLMS. The Zn(2+) site is built by C36, C39, H52, H58, C97, C100, H113, and H119. Residues 263 to 343 form a disordered region; that stretch reads MTPLSKEGPP…QPYVREDMMG (81 aa). Composition is skewed to low complexity over residues 270–289 and 310–323; these read GPPA…TGGA and GPSS…MGGL. Residues 324–333 are compositionally biased toward pro residues; that stretch reads MPPPYPPPHS.

Its subcellular location is the nucleus. It is found in the cytoplasm. Binds preferentially to dsRNA, but also to RNA-DNA hybrids. In Xenopus tropicalis (Western clawed frog), this protein is Zinc finger protein 346.